Reading from the N-terminus, the 346-residue chain is tRNA-specific 2-thiouridylase MnmA (346 aa).

ATP is bound at residue 6-13; the sequence is AMSGGTDS. Residue C90 is the Nucleophile of the active site. An intrachain disulfide couples C90 to C187. Residue G114 coordinates ATP. Residues 137–139 form an interaction with tRNA region; sequence KDQ. C187 serves as the catalytic Cysteine persulfide intermediate. An interaction with tRNA region spans residues 292–293; sequence RY.

It belongs to the MnmA/TRMU family.

Its subcellular location is the cytoplasm. It catalyses the reaction S-sulfanyl-L-cysteinyl-[protein] + uridine(34) in tRNA + AH2 + ATP = 2-thiouridine(34) in tRNA + L-cysteinyl-[protein] + A + AMP + diphosphate + H(+). Its function is as follows. Catalyzes the 2-thiolation of uridine at the wobble position (U34) of tRNA, leading to the formation of s(2)U34. The protein is tRNA-specific 2-thiouridylase MnmA of Nitratidesulfovibrio vulgaris (strain DP4) (Desulfovibrio vulgaris).